Here is a 433-residue protein sequence, read N- to C-terminus: Trigger factor (433 aa).

A PPIase FKBP-type domain is found at Glu161–Pro246.

This sequence belongs to the FKBP-type PPIase family. Tig subfamily.

Its subcellular location is the cytoplasm. The catalysed reaction is [protein]-peptidylproline (omega=180) = [protein]-peptidylproline (omega=0). Involved in protein export. Acts as a chaperone by maintaining the newly synthesized protein in an open conformation. Functions as a peptidyl-prolyl cis-trans isomerase. The sequence is that of Trigger factor from Actinobacillus pleuropneumoniae serotype 5b (strain L20).